Consider the following 45-residue polypeptide: FKBP-type peptidyl-prolyl cis-trans isomerase, chloroplastic (45 aa).

This sequence belongs to the FKBP-type PPIase family. As to expression, expressed in leaves, but not in roots.

It localises to the plastid. The protein resides in the chloroplast thylakoid lumen. The catalysed reaction is [protein]-peptidylproline (omega=180) = [protein]-peptidylproline (omega=0). PPIases accelerate the folding of proteins. It catalyzes the cis-trans isomerization of proline imidic peptide bonds in oligopeptides. This chain is FKBP-type peptidyl-prolyl cis-trans isomerase, chloroplastic, found in Vicia faba (Broad bean).